The sequence spans 432 residues: Adenylosuccinate synthetase (432 aa).

Residues 12-18 and 40-42 each bind GTP; these read GDEGKGK and GHT. Aspartate 13 functions as the Proton acceptor in the catalytic mechanism. Mg(2+) is bound by residues aspartate 13 and glycine 40. IMP is bound by residues 13 to 16, 38 to 41, threonine 130, arginine 144, glutamine 225, threonine 240, and arginine 304; these read DEGK and NAGH. The active-site Proton donor is the histidine 41. 300–306 is a binding site for substrate; that stretch reads ATTGRPR. Residues arginine 306, 332-334, and 414-416 each bind GTP; these read KLD and SVG.

It belongs to the adenylosuccinate synthetase family. As to quaternary structure, homodimer. The cofactor is Mg(2+).

It is found in the cytoplasm. The catalysed reaction is IMP + L-aspartate + GTP = N(6)-(1,2-dicarboxyethyl)-AMP + GDP + phosphate + 2 H(+). It functions in the pathway purine metabolism; AMP biosynthesis via de novo pathway; AMP from IMP: step 1/2. In terms of biological role, plays an important role in the de novo pathway of purine nucleotide biosynthesis. Catalyzes the first committed step in the biosynthesis of AMP from IMP. This is Adenylosuccinate synthetase from Anaeromyxobacter dehalogenans (strain 2CP-C).